The following is a 297-amino-acid chain: Formylmethanofuran--tetrahydromethanopterin formyltransferase (297 aa).

This sequence belongs to the FTR family. As to quaternary structure, homotetramer.

It is found in the cytoplasm. The catalysed reaction is N-formylmethanofuran + 5,6,7,8-tetrahydromethanopterin + H(+) = N(5)-formyl-5,6,7,8-tetrahydromethanopterin + methanofuran. It functions in the pathway one-carbon metabolism; methanogenesis from CO(2); 5,10-methenyl-5,6,7,8-tetrahydromethanopterin from CO(2): step 2/3. Its function is as follows. Catalyzes the reversible transfer of a formyl group from formylmethanofuran (formyl-MFR) to tetrahydromethanopterin (H(4)MPT) to produce 5-formyl tetrahydromethanopterin (5-formyl-H(4)MPT) and methanofuran (MFR). This is Formylmethanofuran--tetrahydromethanopterin formyltransferase from Methanosarcina acetivorans (strain ATCC 35395 / DSM 2834 / JCM 12185 / C2A).